We begin with the raw amino-acid sequence, 671 residues long: Protein cereblon (671 aa).

Over residues 1-11 (MDGEEAADIDE) the composition is skewed to acidic residues. 3 disordered regions span residues 1–59 (MDGE…VDGD), 104–130 (LTGT…PAQP), and 150–187 (GHNV…DAEA). Low complexity-rich tracts occupy residues 39–51 (QQQQ…SSGE) and 105–115 (TGTTTPTPTAP). A compositionally biased stretch (polar residues) spans 162 to 173 (SISSRHSGSDMS). Residues 309 to 537 (RMLIFMHQHI…IIGSTLKQES (229 aa)) form the Lon N-terminal domain. Residues 536–645 (ESLFYCRYCN…LAGSSVRIGK (110 aa)) enclose the CULT domain. Zn(2+)-binding residues include Cys541, Cys544, Cys610, and Cys613.

It belongs to the CRBN family. Likely a component of a DCX (DDB1-CUL4-X-box) protein ligase complex. May interact with pic/DDB1. Ubiquitinated.

The protein localises to the nucleus. It participates in protein modification; protein ubiquitination. In terms of biological role, substrate recognition component of a DCX (DDB1-CUL4-X-box) E3 protein ligase complex that mediates the ubiquitination and subsequent proteasomal degradation of target proteins. Has an essential role in mediating growth by negatively regulating insulin signaling. It also has a role in maintaining presynaptic function in the neuromuscular junction synapses of third-instar larvae. In Drosophila grimshawi (Hawaiian fruit fly), this protein is Protein cereblon.